A 962-amino-acid chain; its full sequence is Leucine-rich repeat-containing G-protein coupled receptor 6 (962 aa).

The N-terminal stretch at 1–16 (MLVVLLILHAVSCAHS) is a signal peptide. In terms of domain architecture, LRRNT spans 20–60 (PGAAVPVKQCPSACQCEEDGILLLVDCSEQGLSSVPTDLSP). LRR repeat units follow at residues 38 to 58 (DGIL…PTDL), 59 to 82 (SPLT…AFRN), 83 to 106 (LHFL…MLQG), 107 to 131 (LYNL…PWEL), 133 to 154 (NLLS…TLSG), 155 to 178 (MRSL…ALND), 179 to 202 (LSSL…AFRN), 203 to 226 (LSNL…CFEG), 228 to 250 (HSLE…IRTL), 251 to 273 (AKLQ…AFVG), 275 to 297 (PLLQ…AFQF), 298 to 321 (LPKL…LKGT), 322 to 344 (TSLQ…LCHL), 345 to 368 (LPKL…YHCT), 370 to 390 (LQEI…TFQQ), 391 to 414 (LGSL…AFFS), and 416 to 438 (QSLI…GLTS). N71 carries N-linked (GlcNAc...) asparagine glycosylation. N202 carries an N-linked (GlcNAc...) asparagine glycan. 7 helical membrane-spanning segments follow: residues 559–579 (GMWL…LTVF), 590–610 (FIIG…GTLA), 647–669 (SILF…RAYG), 679–699 (AAAV…LIGV), 723–743 (FMVA…GTYI), 766–786 (VAWL…LTFS), and 801–821 (SVVL…YLLF). A disulfide bridge connects residues C633 and C708.

This sequence belongs to the G-protein coupled receptor 1 family.

The protein resides in the cell membrane. In terms of biological role, receptor for R-spondins that potentiates the canonical Wnt signaling pathway. Upon binding to R-spondins (rspo1, rspo2, rspo3 or rspo4), associates with phosphorylated lrp6 and frizzled receptors that are activated by extracellular Wnt receptors, triggering the canonical Wnt signaling pathway to increase expression of target genes. In contrast to classical G-protein coupled receptors, does not activate heterotrimeric G-proteins to transduce the signal. The polypeptide is Leucine-rich repeat-containing G-protein coupled receptor 6 (lgr6) (Danio rerio (Zebrafish)).